Consider the following 444-residue polypeptide: MEKYMSLLTRIEEMMQSTSYQEGDRLPSIRQLSARYQVSKSTVIRALQELEKRHLIYSVPKSGYYIVKKSGKSKSGQPGPIDFATSAPDPDVFPYLDFQHCINKAIDTYKNDLFIYGTPKGLPSLIRVLRKLLATQQVFADERHIFITSGVQQALSLLCAMPFPNGKEKIAIEQPGYHLMVEQLETLGIPAIGVKRTEEGLDIAKVERLFQTESIKFFYTMPRFHNPLGCSLSERDKQELVRLAEAYDVYLVEDDYLGDLEENKKADPLYAYDLSSHVIYLKSFSKMMFPGLRVGAAVLPEALTDTFYAYKKLNDIDCSMISQAALEIYLKSGMYGRHKEKIRDSYKERSLRLHQAIRTHRQLGSGRFTFSSGQAPCMHTHLVLPQDLPASRVIHRLEKQGVLLEAIDRHYLSDYPKENLLKINISNVKTEDIERGVKLLMSHL.

The 69-residue stretch at 1–69 (MEKYMSLLTR…PKSGYYIVKK (69 aa)) folds into the HTH gntR-type domain. The H-T-H motif DNA-binding region spans 29–48 (IRQLSARYQVSKSTVIRALQ). Lys-286 is modified (N6-(pyridoxal phosphate)lysine).

The protein in the C-terminal section; belongs to the class-I pyridoxal-phosphate-dependent aminotransferase family. Pyridoxal 5'-phosphate is required as a cofactor.

This is an uncharacterized protein from Bacillus subtilis (strain 168).